The sequence spans 793 residues: Protein PAT1 homolog (793 aa).

2 positions are modified to phosphoserine: serine 200 and serine 208. 2 disordered regions span residues 203–256 (PPGS…TGNR) and 292–312 (MLQQ…GSQN). The segment covering 219-242 (PYQSGGPQMGSPNFSPFPNLQPQL) has biased composition (polar residues). Serine 342 and serine 343 each carry phosphoserine. The interval 476–501 (RPLLEVDPPNSAKFGNAEHKPTDKPL) is disordered. A compositionally biased stretch (basic and acidic residues) spans 491 to 501 (NAEHKPTDKPL).

As to quaternary structure, interacts with MPK4 and SUMM2. Post-translationally, phosphorylated at Ser-208 by MPK4 upon flg22 elicitation. Phosphorylated at Ser-200, Ser-342 and Ser-343 upon flg22 elicitation.

It localises to the cytoplasm. It is found in the P-body. In terms of biological role, activator of mRNA decapping. Involved in mRNA decay via decapping. Involved in disease resistance in response to biotrophic and necrotrophic pathogens. Is part of a signaling pathway including MPK4 and the disease resistance protein SUMM2. The sequence is that of Protein PAT1 homolog from Arabidopsis thaliana (Mouse-ear cress).